The following is a 661-amino-acid chain: MPYELISDYEPMGDQPQAIESLVNGLNKGYRFQTLLGVTGSGKTFTMANVIKEVNRPVLIISPNKTLAAQLYSEFKAFFPNNKVEFFISYYDYYQPEAYVPTKDLYIEKSADINDVIARMRMSAIKSIMTRRDVIVVASVSAIYACGDPRDFDTLNIKLEVGQRINLSEFVKKLVKIGYERKEDIGLTGSFRLRGDTLEIFPSYQDEGIRIELFGDEIDRMYTFDRMNRDVIERLDRLTIYPTKEYVTTEEKIERAVKSIRAELDEQVKKLRSEGKELEAQRLWQRTMNDIELLSTLGYCTGIENYSRHFDGRQPGEPPYSLLDYYDEDFIVFIDESHITIPQLRAMYHGEMSRKKSLVEYGFRLPCAYDNRPLKFDEFMQKVNQVIFVSATPGPYELEVSEQVVEQIIRPTGLIDPQVEVRPTRYQVDDLVNEIVQVKKRGEKALVTVLTKKTAEMLAEYLVEFNIRALYLHSELDAIKRVEVLKKLRAGEIDVVVGVNLLREGLDLPEVSLVAILDADTEGFLRSETTLIQIIGRTARNENGKVIMYADRITPAMQRAIDETNRRRKIQMEYNEKHGIKPKTIIKPLMEDIFAPFRDKEEEMYKVYEDSILQMKESLSLEEYAALLEEEMYKAASELRYEDAARLRDELFKIKEELNRN.

Positions asparagine 24–isoleucine 209 constitute a Helicase ATP-binding domain. ATP is bound at residue glycine 37–threonine 44. A Beta-hairpin motif is present at residues tyrosine 90–isoleucine 113. Residues aspartate 430–phenylalanine 594 form the Helicase C-terminal domain. Positions glutamate 622–glutamate 657 constitute a UVR domain.

Belongs to the UvrB family. As to quaternary structure, forms a heterotetramer with UvrA during the search for lesions. Interacts with UvrC in an incision complex.

The protein resides in the cytoplasm. In terms of biological role, the UvrABC repair system catalyzes the recognition and processing of DNA lesions. A damage recognition complex composed of 2 UvrA and 2 UvrB subunits scans DNA for abnormalities. Upon binding of the UvrA(2)B(2) complex to a putative damaged site, the DNA wraps around one UvrB monomer. DNA wrap is dependent on ATP binding by UvrB and probably causes local melting of the DNA helix, facilitating insertion of UvrB beta-hairpin between the DNA strands. Then UvrB probes one DNA strand for the presence of a lesion. If a lesion is found the UvrA subunits dissociate and the UvrB-DNA preincision complex is formed. This complex is subsequently bound by UvrC and the second UvrB is released. If no lesion is found, the DNA wraps around the other UvrB subunit that will check the other stand for damage. The protein is UvrABC system protein B of Fervidobacterium nodosum (strain ATCC 35602 / DSM 5306 / Rt17-B1).